Consider the following 203-residue polypeptide: Sec-independent protein translocase protein TatB (203 aa).

Residues 1-21 traverse the membrane as a helical segment; the sequence is MFDIGWTELLVIAVVLIVVVG. The tract at residues 179 to 203 is disordered; sequence KPKRTTAVRKPATLKKPAQTKKDEA.

This sequence belongs to the TatB family. The Tat system comprises two distinct complexes: a TatABC complex, containing multiple copies of TatA, TatB and TatC subunits, and a separate TatA complex, containing only TatA subunits. Substrates initially bind to the TatABC complex, which probably triggers association of the separate TatA complex to form the active translocon.

It localises to the cell inner membrane. Functionally, part of the twin-arginine translocation (Tat) system that transports large folded proteins containing a characteristic twin-arginine motif in their signal peptide across membranes. Together with TatC, TatB is part of a receptor directly interacting with Tat signal peptides. TatB may form an oligomeric binding site that transiently accommodates folded Tat precursor proteins before their translocation. The protein is Sec-independent protein translocase protein TatB of Rhizobium johnstonii (strain DSM 114642 / LMG 32736 / 3841) (Rhizobium leguminosarum bv. viciae).